We begin with the raw amino-acid sequence, 307 residues long: Phosphate import ATP-binding protein PstB (307 aa).

A disordered region spans residues 1 to 30 (MSETTYTTTEDTDDTNSTDSMVGTTTGETD). Positions 48–302 (LGVDDLDVYY…PQSERVEDYI (255 aa)) constitute an ABC transporter domain. 80–87 (GPSGCGKS) is an ATP binding site.

Belongs to the ABC transporter superfamily. Phosphate importer (TC 3.A.1.7) family. As to quaternary structure, the complex is composed of two ATP-binding proteins (PstB), two transmembrane proteins (PstC and PstA) and a solute-binding protein (PstS).

Its subcellular location is the cell membrane. It carries out the reaction phosphate(out) + ATP + H2O = ADP + 2 phosphate(in) + H(+). In terms of biological role, part of the ABC transporter complex PstSACB involved in phosphate import. Responsible for energy coupling to the transport system. This Haloquadratum walsbyi (strain DSM 16790 / HBSQ001) protein is Phosphate import ATP-binding protein PstB.